The following is a 168-amino-acid chain: SsrA-binding protein (168 aa).

The disordered stretch occupies residues 1–20 (MAAQSKQAKPSGKQGGKKII).

The protein belongs to the SmpB family.

The protein resides in the cytoplasm. Its function is as follows. Required for rescue of stalled ribosomes mediated by trans-translation. Binds to transfer-messenger RNA (tmRNA), required for stable association of tmRNA with ribosomes. tmRNA and SmpB together mimic tRNA shape, replacing the anticodon stem-loop with SmpB. tmRNA is encoded by the ssrA gene; the 2 termini fold to resemble tRNA(Ala) and it encodes a 'tag peptide', a short internal open reading frame. During trans-translation Ala-aminoacylated tmRNA acts like a tRNA, entering the A-site of stalled ribosomes, displacing the stalled mRNA. The ribosome then switches to translate the ORF on the tmRNA; the nascent peptide is terminated with the 'tag peptide' encoded by the tmRNA and targeted for degradation. The ribosome is freed to recommence translation, which seems to be the essential function of trans-translation. The sequence is that of SsrA-binding protein from Mycobacterium ulcerans (strain Agy99).